A 174-amino-acid polypeptide reads, in one-letter code: Alpha-crystallin B chain (174 aa).

N-acetylmethionine is present on M1. Residues 55-163 (RMPSWLETGL…PERSIPITRE (109 aa)) form the sHSP domain. Positions 82, 103, 105, and 110 each coordinate Zn(2+). The interval 148-174 (RKQSDVPERSIPITREEKPAIAGSQRK) is disordered. Residues 149 to 166 (KQSDVPERSIPITREEKP) show a composition bias toward basic and acidic residues.

This sequence belongs to the small heat shock protein (HSP20) family. Heteromer composed of three CRYAA and one CRYAB subunits. Aggregates with homologous proteins, including the small heat shock protein HSPB1, to form large heteromeric complexes. Inter-subunit bridging via zinc ions enhances stability, which is crucial as there is no protein turn over in the lens. Lens as well as other tissues.

Functionally, may contribute to the transparency and refractive index of the lens. This Gallus gallus (Chicken) protein is Alpha-crystallin B chain (CRYAB).